A 311-amino-acid chain; its full sequence is Coproporphyrin III ferrochelatase (311 aa).

Residues Tyr-12, Arg-29, 45-46, Ser-53, and Tyr-124 each bind Fe-coproporphyrin III; that span reads RY. Residues His-182 and Glu-263 each contribute to the Fe(2+) site.

The protein belongs to the ferrochelatase family.

It localises to the cytoplasm. The catalysed reaction is Fe-coproporphyrin III + 2 H(+) = coproporphyrin III + Fe(2+). Its pathway is porphyrin-containing compound metabolism; protoheme biosynthesis. In terms of biological role, involved in coproporphyrin-dependent heme b biosynthesis. Catalyzes the insertion of ferrous iron into coproporphyrin III to form Fe-coproporphyrin III. This is Coproporphyrin III ferrochelatase from Bacillus mycoides (strain KBAB4) (Bacillus weihenstephanensis).